We begin with the raw amino-acid sequence, 98 residues long: NADH-ubiquinone oxidoreductase chain 4L (98 aa).

A run of 3 helical transmembrane segments spans residues 1–21, 27–47, and 61–81; these read MTLTYMNIMLAFAISLLGMLT, VASLLCLEGMMMSLFIMATLI, and IILLVFAACETAVGLALLISI.

It belongs to the complex I subunit 4L family. Core subunit of respiratory chain NADH dehydrogenase (Complex I) which is composed of 45 different subunits.

It localises to the mitochondrion inner membrane. The enzyme catalyses a ubiquinone + NADH + 5 H(+)(in) = a ubiquinol + NAD(+) + 4 H(+)(out). Its function is as follows. Core subunit of the mitochondrial membrane respiratory chain NADH dehydrogenase (Complex I) which catalyzes electron transfer from NADH through the respiratory chain, using ubiquinone as an electron acceptor. Part of the enzyme membrane arm which is embedded in the lipid bilayer and involved in proton translocation. This chain is NADH-ubiquinone oxidoreductase chain 4L (MT-ND4L), found in Macaca mulatta (Rhesus macaque).